We begin with the raw amino-acid sequence, 81 residues long: Photosystem I iron-sulfur center (81 aa).

2 4Fe-4S ferredoxin-type domains span residues 2–31 (SHTVKIYDTCIGCTQCVRACPTDVLEMVPW) and 39–68 (IASSPRTEDCVGCKRCETACPTDFLSIRVY). [4Fe-4S] cluster contacts are provided by C11, C14, C17, C21, C48, C51, C54, and C58.

The cyanobacterial PSI reaction center is composed of one copy each of PsaA,B,C,D,E,F,I,J,K,L,M and X, and forms trimeric complexes. [4Fe-4S] cluster serves as cofactor.

It is found in the cellular thylakoid membrane. It catalyses the reaction reduced [plastocyanin] + hnu + oxidized [2Fe-2S]-[ferredoxin] = oxidized [plastocyanin] + reduced [2Fe-2S]-[ferredoxin]. In terms of biological role, apoprotein for the two 4Fe-4S centers FA and FB of photosystem I (PSI); essential for photochemical activity. FB is the terminal electron acceptor of PSI, donating electrons to ferredoxin. The C-terminus interacts with PsaA/B/D and helps assemble the protein into the PSI complex. Required for binding of PsaD and PsaE to PSI. PSI is a plastocyanin/cytochrome c6-ferredoxin oxidoreductase, converting photonic excitation into a charge separation, which transfers an electron from the donor P700 chlorophyll pair to the spectroscopically characterized acceptors A0, A1, FX, FA and FB in turn. The chain is Photosystem I iron-sulfur center from Mastigocladus laminosus (Fischerella sp.).